The sequence spans 130 residues: MKVLGNILWWAFVGFMAYATLIKPDNTDPAVVNYEEPLPMELANYGEPGEGAKIMNAAKIMGRDYAWKHVKEDRLPCLFAAGVVADNILVKYHFSNETEFKLKAAAVRECANVAENNGFVLVGRVFEKRN.

A signal peptide spans methionine 1–alanine 19.

This is an uncharacterized protein from Escherichia coli (strain K12).